A 152-amino-acid polypeptide reads, in one-letter code: Protein FYV5 (152 aa).

A run of 5 helical transmembrane segments spans residues 26 to 46 (IISICFSMLSFVFDFSVRICS), 56 to 76 (LISSSAFKVVSAFSLAGSCVL), 82 to 102 (VGIIVSLLLFNFSTCNFVLFL), 106 to 126 (LIDLFFCTFLPTPTFLPTPFF), and 127 to 147 (FMLHLPIFSLLNALELLYLII).

It is found in the cell membrane. Its subcellular location is the secreted. The protein resides in the cell wall. In terms of biological role, involved in maintaining an adequate ionic strength homeostasis of the cellular aqueous environment, necessary for normal growth rate. Required for survival upon exposure to K1 killer toxin and hence plays a role in cell wall glucan synthesis. Required for dithiothreitol (DTT) resistance. Involved in cell cycle progression. The polypeptide is Protein FYV5 (FYV5) (Saccharomyces cerevisiae (strain ATCC 204508 / S288c) (Baker's yeast)).